Consider the following 450-residue polypeptide: L-galactonate dehydratase (450 aa).

Lys221 is a catalytic residue. Mg(2+) contacts are provided by Asp251, Glu277, and Glu306. The active site involves His356.

The protein belongs to the mandelate racemase/muconate lactonizing enzyme family. Mg(2+) is required as a cofactor.

The enzyme catalyses L-galactonate = 2-dehydro-3-deoxy-L-galactonate + H2O. The protein operates within carbohydrate acid metabolism. Its function is as follows. Mediates the conversion of L-galactonate to 2-dehydro-3-deoxy-L-galactonate, the second step in D-galacturonate catabolic process. This is L-galactonate dehydratase (lgd1) from Hypocrea jecorina (Trichoderma reesei).